The chain runs to 460 residues: NADH-ubiquinone oxidoreductase chain 4 (460 aa).

The next 13 helical transmembrane spans lie at W22 to L42, P61 to S81, Y97 to A114, I118 to N140, T149 to L169, I196 to L216, P226 to M246, L259 to M279, S286 to I305, W309 to L331, M352 to P372, I395 to M415, and L437 to W457.

The protein belongs to the complex I subunit 4 family.

The protein resides in the mitochondrion membrane. The enzyme catalyses a ubiquinone + NADH + 5 H(+)(in) = a ubiquinol + NAD(+) + 4 H(+)(out). Core subunit of the mitochondrial membrane respiratory chain NADH dehydrogenase (Complex I) that is believed to belong to the minimal assembly required for catalysis. Complex I functions in the transfer of electrons from NADH to the respiratory chain. The immediate electron acceptor for the enzyme is believed to be ubiquinone. The sequence is that of NADH-ubiquinone oxidoreductase chain 4 (MT-ND4) from Tetraodon nigroviridis (Spotted green pufferfish).